A 270-amino-acid chain; its full sequence is Aliphatic sulfonates import ATP-binding protein SsuB (270 aa).

Residues 17–238 (LASKGLRKTF…ARGSHRLAAL (222 aa)) enclose the ABC transporter domain. 49-56 (GRSGCGKS) contributes to the ATP binding site. Residues 248-270 (STPGTAPEPDPVAPLPTQLRWAH) form a disordered region.

Belongs to the ABC transporter superfamily. Aliphatic sulfonates importer (TC 3.A.1.17.2) family. As to quaternary structure, the complex is composed of two ATP-binding proteins (SsuB), two transmembrane proteins (SsuC) and a solute-binding protein (SsuA).

The protein resides in the cell inner membrane. It carries out the reaction ATP + H2O + aliphatic sulfonate-[sulfonate-binding protein]Side 1 = ADP + phosphate + aliphatic sulfonateSide 2 + [sulfonate-binding protein]Side 1.. Functionally, part of the ABC transporter complex SsuABC involved in aliphatic sulfonates import. Responsible for energy coupling to the transport system. This Pseudomonas putida (strain ATCC 47054 / DSM 6125 / CFBP 8728 / NCIMB 11950 / KT2440) protein is Aliphatic sulfonates import ATP-binding protein SsuB.